The primary structure comprises 206 residues: Probable chemoreceptor glutamine deamidase CheD 1 (206 aa).

This sequence belongs to the CheD family.

The enzyme catalyses L-glutaminyl-[protein] + H2O = L-glutamyl-[protein] + NH4(+). Its function is as follows. Probably deamidates glutamine residues to glutamate on methyl-accepting chemotaxis receptors (MCPs), playing an important role in chemotaxis. In Shewanella oneidensis (strain ATCC 700550 / JCM 31522 / CIP 106686 / LMG 19005 / NCIMB 14063 / MR-1), this protein is Probable chemoreceptor glutamine deamidase CheD 1.